The sequence spans 658 residues: Carnitine O-palmitoyltransferase 2, mitochondrial (658 aa).

The transit peptide at Met-1–Leu-25 directs the protein to the mitochondrion. Residues Ser-26 to Leu-178 lie on the Mitochondrial matrix side of the membrane. Residue Lys-69 is modified to N6-succinyllysine. At Lys-79 the chain carries N6-acetyllysine. Lys-85 is modified (N6-succinyllysine). An intramembrane region (note=Mitochondrial inner membrane) is located at residues Asn-179–Asn-208. Over Ala-209–Ser-658 the chain is Mitochondrial matrix. At Lys-239 the chain carries N6-acetyllysine; alternate. Lys-239 is modified (N6-succinyllysine; alternate). Lys-305 is modified (N6-acetyllysine). Catalysis depends on His-372, which acts as the Proton acceptor. The residue at position 418 (Lys-418) is an N6-acetyllysine; alternate. Residue Lys-418 is modified to N6-succinyllysine; alternate. N6-succinyllysine is present on residues Lys-424 and Lys-439. Gly-452–Asp-464 lines the CoA pocket. (R)-carnitine contacts are provided by Tyr-486, Ser-488, and Thr-499. Lys-510 and Lys-544 each carry N6-acetyllysine; alternate. 2 positions are modified to N6-succinyllysine; alternate: Lys-510 and Lys-544.

This sequence belongs to the carnitine/choline acetyltransferase family.

The protein localises to the mitochondrion inner membrane. It carries out the reaction (R)-carnitine + hexadecanoyl-CoA = O-hexadecanoyl-(R)-carnitine + CoA. The catalysed reaction is octanoyl-CoA + (R)-carnitine = O-octanoyl-(R)-carnitine + CoA. It catalyses the reaction decanoyl-CoA + (R)-carnitine = O-decanoyl-(R)-carnitine + CoA. The enzyme catalyses dodecanoyl-CoA + (R)-carnitine = O-dodecanoyl-R-carnitine + CoA. It carries out the reaction tetradecanoyl-CoA + (R)-carnitine = O-tetradecanoyl-(R)-carnitine + CoA. The catalysed reaction is (R)-carnitine + octadecanoyl-CoA = O-octadecanoyl-(R)-carnitine + CoA. It catalyses the reaction eicosanoyl-CoA + (R)-carnitine = O-eicosanoyl-(R)-carnitine + CoA. The enzyme catalyses (9Z)-tetradecenoyl-CoA + (R)-carnitine = O-(9Z)-tetradecenoyl-(R)-carnitine + CoA. It carries out the reaction (5Z)-tetradecenoyl-CoA + (R)-carnitine = O-(5Z)-tetradecenoyl-(R)-carnitine + CoA. The catalysed reaction is (R)-carnitine + (9Z)-octadecenoyl-CoA = O-(9Z)-octadecenoyl-(R)-carnitine + CoA. It catalyses the reaction 4,8-dimethylnonanoyl-CoA + (R)-carnitine = O-4,8-dimethylnonanoyl-(R)-carnitine + CoA. It participates in lipid metabolism; fatty acid beta-oxidation. Functionally, involved in the intramitochondrial synthesis of acylcarnitines from accumulated acyl-CoA metabolites. Reconverts acylcarnitines back into the respective acyl-CoA esters that can then undergo beta-oxidation, an essential step for the mitochondrial uptake of long-chain fatty acids and their subsequent beta-oxidation in the mitochondrion. Active with medium (C8-C12) and long-chain (C14-C18) acyl-CoA esters. This is Carnitine O-palmitoyltransferase 2, mitochondrial (CPT2) from Macaca fascicularis (Crab-eating macaque).